Reading from the N-terminus, the 217-residue chain is MSGAGAIAAASVGCLRTGVPRPFSAYGRGLIIRCHSTGMTLDNINRAAVDQIIRVDHAGEYGANRIYAGQMAVLGRTSVGPVIQKMWDQEKNHLKKFNELMVAFRVRPTVLMPLWNVAGFALGAGTALLGKEGAMACTVAVEESIAHHYNNQIRMLMEEDAEKYEELLQVIKQFRDEELEHHDTGLEHDAELAPAYTLLKRLIQAGCSAAIYLSERF.

2 tandem repeats follow at residues 48-129 (AVDQ…TALL) and 130-217 (GKEG…SERF). Residues 48 to 217 (AVDQIIRVDH…SAAIYLSERF (170 aa)) form a 2 X approximate tandem repeats region. Fe cation-binding residues include Glu-60, Glu-90, His-93, Glu-142, Glu-178, and His-181. Tyr-212 and Arg-216 together coordinate NADH.

Belongs to the COQ7 family. Component of a multi-subunit COQ enzyme complex. Interacts with COQ8B and COQ6. Interacts with COQ9. The cofactor is Fe cation.

It is found in the mitochondrion inner membrane. It catalyses the reaction a 5-methoxy-2-methyl-3-(all-trans-polyprenyl)benzoquinone + NADH + O2 = a 3-demethylubiquinone + NAD(+) + H2O. The protein operates within cofactor biosynthesis; ubiquinone biosynthesis. Functionally, catalyzes the hydroxylation of the 5-methoxy-2-methyl-3-(all-trans-polyprenyl)benzoquinone at the C6 position and participates in the biosynthesis of ubiquinone. Catalyzes the reaction through a substrate-mediated reduction pathway, whereby NADH shuttles electrons to 5-methoxy-2-methyl-3-(all-trans-decaprenyl)benzoquinone, which then transfers the electrons to the two Fe(3+) centers. The binding of 5-methoxy-2-methyl-3-(all-trans-polyprenyl)benzoquinone (DMQn) mediates reduction of the diiron center by nicotinamide adenine dinucleotide (NADH) and initiates oxygen activation for subsequent DMQ hydroxylation. The physiological substrates are 5-methoxy-2-methyl-3-(all-trans-nonaprenyl)benzoquinone (DMQ(9)) and 5-methoxy-2-methyl-3-(all-trans-decaprenyl)benzoquinone (DMQ(10)), however in vitro the enzyme does not have any specificity concerning the length of the polyprenyl tail, and accepts tails of various lengths with similar efficiency. Also has a structural role in the COQ enzyme complex, stabilizing other COQ polypeptides. Involved in lifespan determination in a ubiquinone-independent manner. Plays a role in modulating mitochondrial stress responses, acting in the nucleus, perhaps via regulating gene expression, independent of its characterized mitochondrial function in ubiquinone biosynthesis. In Rattus norvegicus (Rat), this protein is NADPH-dependent 3-demethoxyubiquinone 3-hydroxylase, mitochondrial.